Consider the following 163-residue polypeptide: Nucleotide-binding protein Asuc_2113 (163 aa).

This sequence belongs to the YajQ family.

In terms of biological role, nucleotide-binding protein. In Actinobacillus succinogenes (strain ATCC 55618 / DSM 22257 / CCUG 43843 / 130Z), this protein is Nucleotide-binding protein Asuc_2113.